Reading from the N-terminus, the 436-residue chain is Testis-expressed protein 44 (436 aa).

Composition is skewed to acidic residues over residues 1-10 (MTTEPLEDPE) and 45-54 (LPDEVPPEDI). Disordered stretches follow at residues 1–142 (MTTE…LTSL) and 165–307 (AENN…SLYG). Composition is skewed to polar residues over residues 81–103 (ASMQ…TDTS) and 167–195 (NNRT…TVSE). Positions 234–247 (EPTKSADQEAEDFK) are enriched in basic and acidic residues. Pro residues predominate over residues 273-289 (QAPPSPNSPADSPPPSP). Position 375 is a phosphoserine (Ser375).

Its subcellular location is the cytoplasm. The sequence is that of Testis-expressed protein 44 (Tex44) from Rattus norvegicus (Rat).